The chain runs to 151 residues: uncharacterized protein (151 aa).

The first 32 residues, 1–32, serve as a signal peptide directing secretion; sequence MEEAEKAKRRSIELLNETRNCAYSSFVALAEA. A helical membrane pass occupies residues 45 to 67; that stretch reads AIGFAGGISGSGHICGALWGSIA.

The protein resides in the membrane. This is an uncharacterized protein from Archaeoglobus fulgidus (strain ATCC 49558 / DSM 4304 / JCM 9628 / NBRC 100126 / VC-16).